The sequence spans 62 residues: Protein DsrB (62 aa).

The protein belongs to the DsrB family.

This chain is Protein DsrB, found in Citrobacter koseri (strain ATCC BAA-895 / CDC 4225-83 / SGSC4696).